Consider the following 443-residue polypeptide: EGF-containing fibulin-like extracellular matrix protein 2 (443 aa).

An N-terminal signal peptide occupies residues 1–27 (MLPFASCLPGSLLLWAFLLLLLGAASP). Position 28 is a pyrrolidone carboxylic acid (glutamine 28). An EGF-like 1; atypical domain is found at 36–81 (YTECTDGYEWDADSQHCRDVNECLTIPEACKGEMKCINHYGGYLCL). 18 cysteine pairs are disulfide-bonded: cysteine 58-cysteine 121, cysteine 65-cysteine 80, cysteine 71-cysteine 109, cysteine 127-cysteine 140, cysteine 134-cysteine 149, cysteine 151-cysteine 162, cysteine 168-cysteine 177, cysteine 173-cysteine 186, cysteine 188-cysteine 201, cysteine 207-cysteine 217, cysteine 213-cysteine 226, cysteine 228-cysteine 241, cysteine 247-cysteine 258, cysteine 254-cysteine 267, cysteine 269-cysteine 281, cysteine 287-cysteine 300, cysteine 294-cysteine 309, and cysteine 315-cysteine 327. The interval 91-117 (LHGEGPPPPAAHAQQPNPCPQGYEPDE) is disordered. The 41-residue stretch at 123–163 (DVDECTQALHDCRPSQDCHNLPGSYQCTCPDGYRKIGPECV) folds into the EGF-like 2; calcium-binding domain. Residues 164–202 (DIDECRYRYCQHRCVNLPGSFRCQCEPGFQLGPNNRSCV) enclose the EGF-like 3; calcium-binding domain. The N-linked (GlcNAc...) asparagine glycan is linked to asparagine 198. One can recognise an EGF-like 4; calcium-binding domain in the interval 203–242 (DVNECDMGAPCEQRCFNSYGTFLCRCNQGYELHRDGFSCS). Residues 243 to 282 (DIDECGYSSYLCQYRCVNEPGRFSCHCPQGYQLLATRLCQ) enclose the EGF-like 5; calcium-binding domain. Positions 283–328 (DIDECETGAHQCSEAQTCVNFHGGYRCVDTNRCVEPYVQVSDNRCL) constitute an EGF-like 6; calcium-binding domain. Asparagine 394 carries an N-linked (GlcNAc...) asparagine glycan.

This sequence belongs to the fibulin family. As to quaternary structure, homodimer; disulfide-linked. Multimer; allows heparin binding. Monomer. Binds preferentially to p53 mutants. Interacts with FBN1 (via N-terminal domain); this interaction inhibits EFEMP2 binding to LOX and ELN. Interacts with ELN with moderate affinity; this interaction regulates ELN self-assembly maturation stage. Interacts with PCOLCE. Interacts with collagen type IV trimer (COL4A1-COL4A1-COL4A2), NID2 and moderately with COL15A1-derived endostatin. Interacts with EMILIN1; this interaction promotes the incorporation of EFEMP2 into the extracellular matrix. Interacts with LTBP4; the LTBP4 long form (LTBP4L) has a stronger binding affinity than the LTBP4 short form and the LTBP4 long form promotes fibrillar deposition of EFEMP2. Interacts with LOX (via propeptide); this interaction is strong and facilitates formation of ternary complexes with ELN during elastic fiber assembly; this interaction limits interaction of EFEMP2 with FBLN5. Interacts with PITX2. Interacts with FBLN5 with moderate affinity. Interacts with LOXL1 (via propeptide), LTBP1 and TGFB1 stronger than with LOXL2 and LTBP3. In terms of processing, N-glycosylated; contains mostly complex-type glycans. Not O-glycosylated. Cleaved by ELANE; produces a 50-55 kDa fragment. Cleaved by MMP2 and MMP9; produces several fragments. As to expression, expressed in elastic fibers of the skin, near the dermal-epidermal junction, surrounding the hair follicles and throughout the dermis. Expressed in tendon around tenocytes. Prominently expressed in cartilage, bone, perichondrium and ligaments. Also detected in bone marrow stroma. Expressed in aorta, lung, and esophagus.

The protein localises to the secreted. It is found in the extracellular space. Its subcellular location is the extracellular matrix. The protein resides in the basement membrane. In terms of biological role, plays a crucial role in elastic fiber formation in tissue, and in the formation of ultrastructural connections between elastic laminae and smooth muscle cells in the aorta, therefore participates in terminal differentiation and maturation of smooth muscle cell (SMC) and in the mechanical properties and wall integrity maintenance of the aorta. In addition, is involved in the control of collagen fibril assembly in tissue throught proteolytic activation of LOX leading to cross- linking of collagen and elastin. Also promotes ELN coacervation and participates in the deposition of ELN coacervates on to microfibrils but also regulates ELN cross- linking through LOX interaction. Moreover adheres to the cells through heparin binding in a calcium-dependent manner and regulates vascularlar smooth muscle cells proliferation through angiotensin signaling. The protein is EGF-containing fibulin-like extracellular matrix protein 2 of Mus musculus (Mouse).